The sequence spans 706 residues: ATP-dependent zinc metalloprotease FtsH (706 aa).

Over residues 1–17 the composition is skewed to polar residues; sequence MAKNSLKPSNPYNSEPE. The segment at 1-20 is disordered; the sequence is MAKNSLKPSNPYNSEPETPQ. Residues 1–24 lie on the Cytoplasmic side of the membrane; the sequence is MAKNSLKPSNPYNSEPETPQPRPK. Residues 25-45 form a helical membrane-spanning segment; sequence LPMIYYVVVIALLIGLQLAFF. Residues 46 to 142 are Periplasmic-facing; it reads WSGSSREIPY…RYEGSPGTTW (97 aa). The disordered stretch occupies residues 88–111; that stretch reads GLPKQEEGNDTTRKLLPGAKTPEN. The span at 91-100 shows a compositional bias: basic and acidic residues; that stretch reads KQEEGNDTTR. The helical transmembrane segment at 143 to 163 threads the bilayer; that stretch reads ISELIQWVLPFALLFGLYFFI. Residues 164–706 are Cytoplasmic-facing; the sequence is FRRMGAGGPG…LRQSRNVSDN (543 aa). ATP is bound at residue 239-246; it reads GPPGTGKT. Residue H462 coordinates Zn(2+). E463 is an active-site residue. Residues H466 and D539 each coordinate Zn(2+). A disordered region spans residues 641–681; the sequence is RPGGQEEDSGEVDCSKKSAENGMVAHEPETTADAESTEKVG.

In the central section; belongs to the AAA ATPase family. This sequence in the C-terminal section; belongs to the peptidase M41 family. In terms of assembly, homohexamer. Requires Zn(2+) as cofactor.

The protein resides in the cell inner membrane. Its function is as follows. Acts as a processive, ATP-dependent zinc metallopeptidase for both cytoplasmic and membrane proteins. Plays a role in the quality control of integral membrane proteins. The sequence is that of ATP-dependent zinc metalloprotease FtsH from Chlorobium luteolum (strain DSM 273 / BCRC 81028 / 2530) (Pelodictyon luteolum).